The chain runs to 331 residues: Biotin synthase (331 aa).

Residues 48-278 (FDSQKFEFCS…SAELRLCGGR (231 aa)) form the Radical SAM core domain. Cys-66, Cys-70, and Cys-73 together coordinate [4Fe-4S] cluster. Positions 110, 143, 203, and 273 each coordinate [2Fe-2S] cluster.

It belongs to the radical SAM superfamily. Biotin synthase family. Homodimer. [4Fe-4S] cluster serves as cofactor. [2Fe-2S] cluster is required as a cofactor.

It carries out the reaction (4R,5S)-dethiobiotin + (sulfur carrier)-SH + 2 reduced [2Fe-2S]-[ferredoxin] + 2 S-adenosyl-L-methionine = (sulfur carrier)-H + biotin + 2 5'-deoxyadenosine + 2 L-methionine + 2 oxidized [2Fe-2S]-[ferredoxin]. Its pathway is cofactor biosynthesis; biotin biosynthesis; biotin from 7,8-diaminononanoate: step 2/2. Its function is as follows. Catalyzes the conversion of dethiobiotin (DTB) to biotin by the insertion of a sulfur atom into dethiobiotin via a radical-based mechanism. This is Biotin synthase from Hydrogenobaculum sp. (strain Y04AAS1).